The chain runs to 194 residues: Putative 3-methyladenine DNA glycosylase (194 aa).

It belongs to the DNA glycosylase MPG family.

The protein is Putative 3-methyladenine DNA glycosylase of Mycolicibacterium fortuitum (Mycobacterium fortuitum).